A 784-amino-acid polypeptide reads, in one-letter code: Protein Skeletor, isoforms B/C (784 aa).

The first 28 residues, 1 to 28, serve as a signal peptide directing secretion; that stretch reads MLAMKDKPWLLLFGLLAALSCLASFGDA. DM13 domains follow at residues 34–143 and 151–258; these read GTKI…VSIP and PQKI…VRLP. Residues 287–419 form the DOMON domain; sequence LAFEVRWAVA…GAESVVWAIG (133 aa). The interval 451 to 491 is disordered; sequence PLPEGARGNSNSSEQEDSAPAAQSSTGGAGYPPAGRPNVEP.

In terms of assembly, interacts with Chro and Mgtor as part of a macromolecular complex forming the spindle matrix. Chro colocalizes with Skeletor (Skel) on the chromosomes at interphase and on spindle during metaphase.

It is found in the cytoplasm. The protein localises to the cytoskeleton. The protein resides in the spindle. Its subcellular location is the nucleus. It localises to the nucleolus. It is found in the chromosome. Its function is as follows. Provides structural support to stabilize and organize the microtubule spindle during mitosis (within embryonic somatic cells) and meiosis (within spermatocytes). The role in mitosis regulation depends on the Ran pathway. The polypeptide is Protein Skeletor, isoforms B/C (Drosophila melanogaster (Fruit fly)).